Here is a 258-residue protein sequence, read N- to C-terminus: Electron transfer flavoprotein beta subunit lysine methyltransferase (258 aa).

It belongs to the methyltransferase superfamily. ETFBKMT family.

It is found in the cytoplasm. The protein localises to the mitochondrion matrix. It catalyses the reaction L-lysyl-[protein] + 3 S-adenosyl-L-methionine = N(6),N(6),N(6)-trimethyl-L-lysyl-[protein] + 3 S-adenosyl-L-homocysteine + 3 H(+). Protein-lysine methyltransferase that selectively trimethylates the flavoprotein ETFB in mitochondria. Thereby, may negatively regulate the function of ETFB in electron transfer from Acyl-CoA dehydrogenases to the main respiratory chain. This chain is Electron transfer flavoprotein beta subunit lysine methyltransferase, found in Danio rerio (Zebrafish).